Reading from the N-terminus, the 199-residue chain is Putative pseudouridine methyltransferase (199 aa).

S-adenosyl-L-methionine-binding residues include Leu-132 and Cys-186.

The protein belongs to the methyltransferase superfamily. TrmY family.

It is found in the cytoplasm. This chain is Putative pseudouridine methyltransferase, found in Vibrio campbellii (strain ATCC BAA-1116).